We begin with the raw amino-acid sequence, 121 residues long: Large ribosomal subunit protein uL18 (121 aa).

Belongs to the universal ribosomal protein uL18 family. Part of the 50S ribosomal subunit; part of the 5S rRNA/L5/L18/L25 subcomplex. Contacts the 5S and 23S rRNAs.

In terms of biological role, this is one of the proteins that bind and probably mediate the attachment of the 5S RNA into the large ribosomal subunit, where it forms part of the central protuberance. This Ureaplasma urealyticum serovar 10 (strain ATCC 33699 / Western) protein is Large ribosomal subunit protein uL18.